The chain runs to 650 residues: DSPGGASDAQKTFDVNSLMPVKYEEIRDPHLKELSLSFDPLSGHYDDDGVSAKRLMKELNEHRLLQQSHWFSLFNPRTREEDLMLYNVDEHSGNWDTFAGNAAFFRVHVNEGFFVYASYSVVIHSKLTQHVVLPPLYEVTPHLFTNSEVIQKAYAAKMTQTPTKIFAHFTGSKSNPEQRVAYFGEDIGMNTHHVTWHLEFPFWWDDAHYDHHIERKGESCSSWVHHQLTVRFDAERLSNYLDPVRELHWDDVIHEGFAPHTSYKYGGYFPDRPDNVNFEDVDGVARVRDMLLFEERIQDAIAHGYLRYNGSTINIRDNHGIDVLGDVFESSMYSPRQDYYGALHNQAHRVLGSQADPHGKFALPPGVLEHFETATRDPAFFRLHKYMDNIFRKHKDSLTPYTKNELKFEGVNIDSIYEKGNLETYFESFMYTGVNIMLLTNDVDDVDIATYITDLAHKELSFQEDVTNEGDIGVLETVRIFAWPHIDDDHVEFSFNEGRWDVIEMDKFWVMLEHGHHSIDRSSFDSTVTIPDRPSFHDIEDRTSEAIPHGKELHIEEFESVTGLPNRFLIPKGLVKGKDMDVMVAVTSGEGLAAVEGLHRSANFAHHGCPEVRYPDKRPHGYPLYRPVDDERIITGVTNFKHIQVKVFHH.

O-linked (GalNAc...) serine glycans are attached at residues Ser-120 and Ser-172. Residues His-193, His-197, and His-225 each contribute to the Cu cation site. Asn-309 carries N-linked (GlcNAc...) asparagine glycosylation. Residues His-344, His-348, and His-384 each coordinate Cu cation.

The protein belongs to the tyrosinase family. Hemocyanin subfamily. In terms of assembly, hexamer of a number of different chains, of which five have been identified. Contains one N-glycosylated and three O-glycosylated residues. The position of one of the O-glycosylated residues has not been determined. In terms of processing, O-linked glycan at Ser-120 may be composed of two GalNAc, three Gal, and two N-acetylneuraminic acid units for a total 1525-Da MW. As to expression, hemolymph.

The protein localises to the secreted. Its subcellular location is the extracellular space. Its function is as follows. Hemocyanins are copper-containing oxygen carriers occurring freely dissolved in the hemolymph of many mollusks and arthropods. This chain is Hemocyanin subunit 2, found in Carcinus aestuarii (Green crab).